A 289-amino-acid chain; its full sequence is NAD kinase (289 aa).

Residue aspartate 82 is the Proton acceptor of the active site. Residues 82 to 83 (DG), arginine 87, 150 to 151 (NE), lysine 161, arginine 178, aspartate 180, 191 to 196 (TAYAMS), alanine 215, and glutamine 250 each bind NAD(+).

It belongs to the NAD kinase family. A divalent metal cation serves as cofactor.

The protein localises to the cytoplasm. The enzyme catalyses NAD(+) + ATP = ADP + NADP(+) + H(+). Its function is as follows. Involved in the regulation of the intracellular balance of NAD and NADP, and is a key enzyme in the biosynthesis of NADP. Catalyzes specifically the phosphorylation on 2'-hydroxyl of the adenosine moiety of NAD to yield NADP. This is NAD kinase from Methanosarcina mazei (strain ATCC BAA-159 / DSM 3647 / Goe1 / Go1 / JCM 11833 / OCM 88) (Methanosarcina frisia).